Consider the following 984-residue polypeptide: Putative formate dehydrogenase SAR2393 (984 aa).

The 2Fe-2S ferredoxin-type domain occupies 3-79; it reads EHLVVTLDGK…PMTVNTVNND (77 aa). Residues Cys-37, Cys-48, Cys-51, and Cys-63 each contribute to the [2Fe-2S] cluster site. Residues 79-119 form the 4Fe-4S His(Cys)3-ligated-type domain; sequence DVKDAQKEALDRILEKHMLYCTVCDYNNGDCEIHNTMDAWG. [4Fe-4S] cluster-binding residues include His-95, Cys-99, Cys-102, Cys-109, Cys-147, Cys-150, Cys-153, Cys-157, Cys-190, Cys-193, Cys-196, Cys-200, Cys-264, Cys-267, Cys-271, and Cys-299. 2 4Fe-4S ferredoxin-type domains span residues 138–165 and 181–211; these read PFYR…LNET and NDVP…VNME. Residues 252 to 984 form a formate dehydrogenase region; it reads MRKERIKKTK…YVFPGNQVDK (733 aa). The 4Fe-4S Mo/W bis-MGD-type domain occupies 257 to 313; that stretch reads IKKTKTVCTYCGVGCSFEVWTKDREILKVQPSHDSPANKIATCVKGKFSWGHINSDQ.

In the C-terminal section; belongs to the prokaryotic molybdopterin-containing oxidoreductase family. The cofactor is [2Fe-2S] cluster. It depends on [4Fe-4S] cluster as a cofactor. Mo-bis(molybdopterin guanine dinucleotide) is required as a cofactor.

The catalysed reaction is formate + NAD(+) = CO2 + NADH. The sequence is that of Putative formate dehydrogenase SAR2393 from Staphylococcus aureus (strain MRSA252).